The following is a 1298-amino-acid chain: Phosphoribosylformylglycinamidine synthase (1298 aa).

The interval 303–327 is disordered; it reads FPGAATGSGGEIRDEGATGRGAKPK. ATP contacts are provided by residues 305–316, 384–386, and Ala-676; these read GAATGSGGEIRD and TGY. Residues Asp-677, Glu-716, Asn-720, and Asp-884 each coordinate Mg(2+). Ser-886 contacts ATP. The Glutamine amidotransferase type-1 domain maps to 1045–1298; it reads VAVLREQGVN…MFRNARAWVN (254 aa). Cys-1138 functions as the Nucleophile in the catalytic mechanism. Active-site residues include His-1263 and Glu-1265.

This sequence in the N-terminal section; belongs to the FGAMS family. Monomer.

It is found in the cytoplasm. The enzyme catalyses N(2)-formyl-N(1)-(5-phospho-beta-D-ribosyl)glycinamide + L-glutamine + ATP + H2O = 2-formamido-N(1)-(5-O-phospho-beta-D-ribosyl)acetamidine + L-glutamate + ADP + phosphate + H(+). The protein operates within purine metabolism; IMP biosynthesis via de novo pathway; 5-amino-1-(5-phospho-D-ribosyl)imidazole from N(2)-formyl-N(1)-(5-phospho-D-ribosyl)glycinamide: step 1/2. Functionally, phosphoribosylformylglycinamidine synthase involved in the purines biosynthetic pathway. Catalyzes the ATP-dependent conversion of formylglycinamide ribonucleotide (FGAR) and glutamine to yield formylglycinamidine ribonucleotide (FGAM) and glutamate. This is Phosphoribosylformylglycinamidine synthase from Pseudomonas savastanoi pv. phaseolicola (strain 1448A / Race 6) (Pseudomonas syringae pv. phaseolicola (strain 1448A / Race 6)).